A 274-amino-acid polypeptide reads, in one-letter code: Putative HTH-type transcriptional regulator RmpR (274 aa).

Residues 18-88 (IERADAIVER…RSGGTFVVNQ (71 aa)) enclose the HTH gntR-type domain. A DNA-binding region (H-T-H motif) is located at residues 46–65 (EAALSEMFGVGGATLREALS). The segment covering 250 to 265 (SRPSSPATAPDGSSSA) has biased composition (polar residues). Residues 250–274 (SRPSSPATAPDGSSSAEAAMIQEGQ) form a disordered region.

Functionally, may regulate the transcription of the rmpAB operon. This is Putative HTH-type transcriptional regulator RmpR (rmpR) from Mycobacterium gastri.